The primary structure comprises 99 residues: MNDLITNLALPQEVINAAGSNNGAGIGYGLVAVGAGLAMIGALGTGLGQGVSAGKAAEAVGRNPEAEAKIRLMMIIGMGIAETAAIYSLIIAILLIFVY.

A run of 2 helical transmembrane segments spans residues 23 to 43 (GAGIGYGLVAVGAGLAMIGAL) and 78 to 98 (MGIAETAAIYSLIIAILLIFV).

The protein belongs to the ATPase C chain family. In terms of assembly, F-type ATPases have 2 components, F(1) - the catalytic core - and F(0) - the membrane proton channel. F(1) has five subunits: alpha(3), beta(3), gamma(1), delta(1), epsilon(1). F(0) has three main subunits: a(1), b(2) and c(10-14). The alpha and beta chains form an alternating ring which encloses part of the gamma chain. F(1) is attached to F(0) by a central stalk formed by the gamma and epsilon chains, while a peripheral stalk is formed by the delta and b chains.

Its subcellular location is the cell membrane. In terms of biological role, f(1)F(0) ATP synthase produces ATP from ADP in the presence of a proton or sodium gradient. F-type ATPases consist of two structural domains, F(1) containing the extramembraneous catalytic core and F(0) containing the membrane proton channel, linked together by a central stalk and a peripheral stalk. During catalysis, ATP synthesis in the catalytic domain of F(1) is coupled via a rotary mechanism of the central stalk subunits to proton translocation. Its function is as follows. Key component of the F(0) channel; it plays a direct role in translocation across the membrane. A homomeric c-ring of between 10-14 subunits forms the central stalk rotor element with the F(1) delta and epsilon subunits. This chain is ATP synthase subunit c, found in Mycoplasma mobile (strain ATCC 43663 / 163K / NCTC 11711) (Mesomycoplasma mobile).